A 282-amino-acid chain; its full sequence is Parvulin-like PPIase (282 aa).

Positions 1-20 (MKKLSVIFLSVSMLSSIAFC) are cleaved as a signal peptide. Positions 138-231 (KEQIKVAHIL…FGWHIIKVLE (94 aa)) constitute a PpiC domain.

It belongs to the PpiC/parvulin rotamase family.

It localises to the cell outer membrane. It carries out the reaction [protein]-peptidylproline (omega=180) = [protein]-peptidylproline (omega=0). In Rickettsia typhi (strain ATCC VR-144 / Wilmington), this protein is Parvulin-like PPIase (plp).